The chain runs to 368 residues: Transcription factor bHLH30 (368 aa).

Positions 3 to 30 form a coiled coil; the sequence is AKKEEEEEEEEDSSEAMNNIQNYQNDLF. Residues 173-222 enclose the bHLH domain; the sequence is AASKSHSEAERRRRERINNHLAKLRSILPNTTKTDKASLLAEVIQHVKEL. Positions 333 to 368 are disordered; that stretch reads KSNVEESSSSGNAKRQRMSSHNTITIVEQQQQYNQR. Residues 337-368 show a composition bias toward polar residues; the sequence is EESSSSGNAKRQRMSSHNTITIVEQQQQYNQR.

Homodimer. Interacts with LHW.

It localises to the nucleus. This Arabidopsis thaliana (Mouse-ear cress) protein is Transcription factor bHLH30 (BHLH30).